A 145-amino-acid chain; its full sequence is Large ribosomal subunit protein bL17 (145 aa).

The tract at residues lysine 123 to alanine 145 is disordered.

This sequence belongs to the bacterial ribosomal protein bL17 family. In terms of assembly, part of the 50S ribosomal subunit. Contacts protein L32.

This is Large ribosomal subunit protein bL17 from Pelagibacter ubique (strain HTCC1062).